Here is a 621-residue protein sequence, read N- to C-terminus: Polycystin-2-like protein 2 (621 aa).

Residues 1-31 (MSEATWWYRGGTSKHDLHYRREAEVNTTLEE) are Cytoplasmic-facing. Residues 32–52 (LLLYFIFLINLCILTFGMVNP) form a helical membrane-spanning segment. Topologically, residues 53–277 (HMYYLNKVMS…SVKLLRYVSY (225 aa)) are extracellular. N-linked (GlcNAc...) asparagine glycosylation is found at Asn115 and Asn138. The chain crosses the membrane as a helical span at residues 278–298 (YDYFIASCEVIFCIFLFVFII). The Cytoplasmic portion of the chain corresponds to 299–314 (QELRKVNEFKSAYFRS). Residues 315–335 (VWNWLEMLLLLLCFLAVSFYA) traverse the membrane as a helical segment. Over 336-360 (YCNMQSFLLLGQLLKNTDSYPDFYF) the chain is Extracellular. The chain crosses the membrane as a helical span at residues 361–381 (LAYWHIYYNNVIAITIFFAWI). Residues 382–406 (KIFKFISFNETMSQLSSTLSRCMKD) lie on the Cytoplasmic side of the membrane. The helical transmembrane segment at 407 to 427 (IVGFAIMFFIIFSAYAQLGFL) threads the bilayer. The Extracellular segment spans residues 428-468 (VFGSQVDDFSTFQNSIFAQFRIVLGDFNFAGIQQANWILGP). Residues 469–489 (IYFITFIFFVFFVLLNMFLAI) form a helical membrane-spanning segment. Residues 490–621 (INDTYSEVKA…KLNQLMRKLH (132 aa)) are Cytoplasmic-facing. Residues 521–551 (NVLEKLRLKKAQAKEEKKMQTTDLAQRARRD) adopt a coiled-coil conformation.

It belongs to the polycystin family. As to quaternary structure, interacts with TRPC1 and TRPC5. As to expression, expressed only in testis and heart.

The protein resides in the membrane. In terms of biological role, exhibits a lower single conductance but no spontaneous channel activity. May function as a regulator of calcium channels or a channel component involving Ca2(+) homeostasis. This chain is Polycystin-2-like protein 2, found in Mus musculus (Mouse).